A 499-amino-acid chain; its full sequence is Maturase K (499 aa).

The protein belongs to the intron maturase 2 family. MatK subfamily.

The protein localises to the plastid. It localises to the chloroplast. Usually encoded in the trnK tRNA gene intron. Probably assists in splicing its own and other chloroplast group II introns. This Ceratozamia mexicana (Mexican horncone) protein is Maturase K.